The sequence spans 410 residues: Schlafen-like protein 1 (410 aa).

2 disordered regions span residues 1-20 (MSLRKRSAQTQMWESPVMSQ) and 141-199 (LHHR…SGVR). The span at 8 to 20 (AQTQMWESPVMSQ) shows a compositional bias: polar residues. Residues 154 to 173 (SHSPGPSPGPSPGLRHPPLP) show a composition bias toward pro residues. Position 264-271 (264-271 (GVEDSGLV)) interacts with ATP. The stretch at 370 to 401 (QKWAMELGKLEEKVKVLTLEKEQLQQQLRQRQ) forms a coiled coil.

This sequence belongs to the Schlafen family. Subgroup I subfamily.

The protein is Schlafen-like protein 1 (Slfnl1) of Mus musculus (Mouse).